A 123-amino-acid chain; its full sequence is Ribosome-binding factor A (123 aa).

This sequence belongs to the RbfA family. Monomer. Binds 30S ribosomal subunits, but not 50S ribosomal subunits or 70S ribosomes.

The protein resides in the cytoplasm. One of several proteins that assist in the late maturation steps of the functional core of the 30S ribosomal subunit. Associates with free 30S ribosomal subunits (but not with 30S subunits that are part of 70S ribosomes or polysomes). Required for efficient processing of 16S rRNA. May interact with the 5'-terminal helix region of 16S rRNA. The polypeptide is Ribosome-binding factor A (Neisseria gonorrhoeae (strain ATCC 700825 / FA 1090)).